The following is a 253-amino-acid chain: 4-phosphopantoate--beta-alanine ligase (253 aa).

ATP is bound by residues Arg-17, Arg-39, 179 to 181, 185 to 186, and 197 to 198; these read DLN, RT, and NL.

This sequence belongs to the archaeal phosphopantothenate synthetase family. Homodimer.

The enzyme catalyses (R)-4-phosphopantoate + beta-alanine + ATP = (R)-4'-phosphopantothenate + AMP + diphosphate + H(+). The protein operates within cofactor biosynthesis; coenzyme A biosynthesis. Catalyzes the condensation of (R)-4-phosphopantoate and beta-alanine to 4'-phosphopantothenate in the CoA biosynthesis pathway. The sequence is that of 4-phosphopantoate--beta-alanine ligase from Methanosarcina mazei (strain ATCC BAA-159 / DSM 3647 / Goe1 / Go1 / JCM 11833 / OCM 88) (Methanosarcina frisia).